Consider the following 199-residue polypeptide: Lipid A acyltransferase PagP (199 aa).

The N-terminal stretch at 1-25 is a signal peptide; the sequence is MNYKDIINACILSGVFLLHSPSALA. Active-site residues include H74, D117, and S118.

It belongs to the lipid A palmitoyltransferase family. As to quaternary structure, homodimer.

The protein resides in the cell outer membrane. It carries out the reaction a lipid A + a 1,2-diacyl-sn-glycero-3-phosphocholine = a hepta-acyl lipid A + a 2-acyl-sn-glycero-3-phosphocholine. The catalysed reaction is a lipid IVA + a 1,2-diacyl-sn-glycero-3-phosphocholine = a lipid IVB + a 2-acyl-sn-glycero-3-phosphocholine. The enzyme catalyses a lipid IIA + a 1,2-diacyl-sn-glycero-3-phosphocholine = a lipid IIB + a 2-acyl-sn-glycero-3-phosphocholine. Transfers a fatty acid residue from the sn-1 position of a phospholipid to the N-linked hydroxyfatty acid chain on the proximal unit of lipid A or its precursors. This is Lipid A acyltransferase PagP from Yersinia pestis bv. Antiqua (strain Antiqua).